The chain runs to 137 residues: Probable calcium-binding protein CML33 (137 aa).

4 consecutive EF-hand domains span residues 1-36 (MNNM…LSPS), 37-72 (IPSE…TAQS), 76-111 (DVEK…LGEK), and 112-137 (CTVE…FVGV). D14, S16, D18, K20, and E25 together coordinate Ca(2+). 5 residues coordinate Ca(2+): D89, N91, D93, K95, and E100.

Its function is as follows. Potential calcium sensor. In Arabidopsis thaliana (Mouse-ear cress), this protein is Probable calcium-binding protein CML33 (CML33).